Here is a 130-residue protein sequence, read N- to C-terminus: Small ribosomal subunit protein uS8 (130 aa).

Belongs to the universal ribosomal protein uS8 family. Part of the 30S ribosomal subunit. Contacts proteins S5 and S12.

One of the primary rRNA binding proteins, it binds directly to 16S rRNA central domain where it helps coordinate assembly of the platform of the 30S subunit. This chain is Small ribosomal subunit protein uS8, found in Enterobacter sp. (strain 638).